A 249-amino-acid polypeptide reads, in one-letter code: Ribosomal RNA small subunit methyltransferase G (249 aa).

S-adenosyl-L-methionine contacts are provided by residues G88, F93, 111 to 113, 139 to 140, and R158; these read DAT and AE. Cysteines 164 and 249 form a disulfide. The tract at residues 245–246 is RNA binding; the sequence is RH.

This sequence belongs to the methyltransferase superfamily. RNA methyltransferase RsmG family.

The protein resides in the cytoplasm. The catalysed reaction is guanosine(527) in 16S rRNA + S-adenosyl-L-methionine = N(7)-methylguanosine(527) in 16S rRNA + S-adenosyl-L-homocysteine. Functionally, specifically methylates the N7 position of guanine in position 527 of 16S rRNA. Shows a marked preference for deproteinized 16S rRNA as substrate and is completely inactive with native 30S subunits as substrate. This Thermus thermophilus (strain ATCC 27634 / DSM 579 / HB8) protein is Ribosomal RNA small subunit methyltransferase G.